The sequence spans 269 residues: Formamidopyrimidine-DNA glycosylase (269 aa).

Catalysis depends on Pro2, which acts as the Schiff-base intermediate with DNA. Glu3 (proton donor) is an active-site residue. The active-site Proton donor; for beta-elimination activity is Lys57. The DNA site is built by His90, Arg109, and Arg150. The FPG-type zinc-finger motif lies at 235-269 (NVYGRKGEPCEACGKAIESKVIGQRNTFFCTRCQR). Catalysis depends on Arg259, which acts as the Proton donor; for delta-elimination activity.

The protein belongs to the FPG family. In terms of assembly, monomer. It depends on Zn(2+) as a cofactor.

The enzyme catalyses Hydrolysis of DNA containing ring-opened 7-methylguanine residues, releasing 2,6-diamino-4-hydroxy-5-(N-methyl)formamidopyrimidine.. The catalysed reaction is 2'-deoxyribonucleotide-(2'-deoxyribose 5'-phosphate)-2'-deoxyribonucleotide-DNA = a 3'-end 2'-deoxyribonucleotide-(2,3-dehydro-2,3-deoxyribose 5'-phosphate)-DNA + a 5'-end 5'-phospho-2'-deoxyribonucleoside-DNA + H(+). Functionally, involved in base excision repair of DNA damaged by oxidation or by mutagenic agents. Acts as a DNA glycosylase that recognizes and removes damaged bases. Has a preference for oxidized purines, such as 7,8-dihydro-8-oxoguanine (8-oxoG). Has AP (apurinic/apyrimidinic) lyase activity and introduces nicks in the DNA strand. Cleaves the DNA backbone by beta-delta elimination to generate a single-strand break at the site of the removed base with both 3'- and 5'-phosphates. The polypeptide is Formamidopyrimidine-DNA glycosylase (Alteromonas mediterranea (strain DSM 17117 / CIP 110805 / LMG 28347 / Deep ecotype)).